We begin with the raw amino-acid sequence, 302 residues long: (2S)-3-sulfopropanediol sulfolyase activating enzyme (302 aa).

Positions 19–301 constitute a Radical SAM core domain; sequence HDGEGIRTLV…RLNIMLKSYE (283 aa). 11 residues coordinate [4Fe-4S] cluster: Cys33, Cys37, Cys40, Cys59, Cys65, Cys68, Cys72, Cys91, Cys94, Cys97, and Cys101. 39–41 lines the S-adenosyl-L-methionine pocket; the sequence is WCS. 2 4Fe-4S ferredoxin-type domains span residues 50 to 81 and 82 to 111; these read PERA…SIVG and GLVC…VYGE. S-adenosyl-L-methionine is bound by residues Gly141 and 190-192; that span reads DIK.

This sequence belongs to the organic radical-activating enzymes family. [4Fe-4S] cluster is required as a cofactor.

It carries out the reaction glycyl-[protein] + reduced [flavodoxin] + S-adenosyl-L-methionine = glycin-2-yl radical-[protein] + semiquinone [flavodoxin] + 5'-deoxyadenosine + L-methionine + H(+). The protein operates within organosulfur degradation; alkanesulfonate degradation. Functionally, involved in the degradation of the organosulfur compound 2(S)-dihydroxypropanesulfonate (DHPS). Catalyzes activation of the (2S)-3-sulfopropanediol sulfolyase HpsG under anaerobic conditions by generation of an organic free radical on a glycine residue. This is (2S)-3-sulfopropanediol sulfolyase activating enzyme from Bilophila wadsworthia (strain 3_1_6).